The sequence spans 1426 residues: A disintegrin and metalloproteinase with thrombospondin motifs 13 (1426 aa).

A signal peptide spans Met1 to Gly33. The propeptide occupies Leu34–Arg76. In terms of domain architecture, Peptidase M12B spans Arg74–Pro291. Residue Glu85 participates in Ca(2+) binding. N-linked (GlcNAc...) asparagine glycans are attached at residues Asn144 and Asn148. 3 disulfides stabilise this stretch: Cys157-Cys210, Cys204-Cys286, and Cys246-Cys270. Positions 175, 184, 186, 189, and 214 each coordinate Ca(2+). His226 lines the Zn(2+) pocket. Glu227 is a catalytic residue. Zn(2+) contacts are provided by His230 and His236. The Ca(2+) site is built by Thr281 and Asp289. The 94-residue stretch at Ser295–Val388 folds into the Disintegrin domain. 11 cysteine pairs are disulfide-bonded: Cys316–Cys342, Cys327–Cys352, Cys337–Cys371, Cys365–Cys376, Cys401–Cys438, Cys405–Cys443, Cys416–Cys428, Cys488–Cys527, Cys513–Cys532, Cys537–Cys553, and Cys550–Cys560. A TSP type-1 1 domain is found at His389–Glu444. Residues Lys445–Ser561 are cysteine-rich. A Cell attachment site motif is present at residues Arg503–Asp505. Positions Asp556–Leu685 are spacer. N-linked (GlcNAc...) asparagine glycans are attached at residues Asn557, Asn564, Asn584, and Asn619. TSP type-1 domains follow at residues Gln687–Pro746, Cys747–Pro810, Pro808–Ser871, Trp904–Pro957, Cys958–Pro1019, Ala1020–Cys1078, and Ala1079–Ala1137. O-linked (Fuc...) serine glycans are attached at residues Ser703 and Ser762. The N-linked (GlcNAc...) asparagine glycan is linked to Asn834. Ser914 is a glycosylation site (O-linked (Fuc...) serine). A glycan (O-linked (Fuc...) threonine) is linked at Thr973. Ser1033 carries O-linked (Fuc...) serine glycosylation. Asn1057 carries an N-linked (GlcNAc...) asparagine glycan. Ser1093 carries an O-linked (Fuc...) serine glycan. CUB domains are found at residues Ala1195–Glu1302 and Gln1293–Ser1426.

The cofactor is Zn(2+). Ca(2+) serves as cofactor. In terms of processing, the precursor is processed by a furin endopeptidase which cleaves off the pro-domain. O-glycosylated. O-fucosylated by POFUT2 on a serine or a threonine residue found within the consensus sequence C1-X(2)-(S/T)-C2-G of the TSP type-1 repeat domains where C1 and C2 are the first and second cysteine residue of the repeat, respectively. Fucosylated repeats can then be further glycosylated by the addition of a beta-1,3-glucose residue by the glucosyltransferase, B3GALTL. Fucosylation mediates the efficient secretion of ADAMTS13. May also be C-glycosylated on tryptophan residues within the consensus sequence W-X-X-W of the TPRs, and also N-glycosylated. These other glycosylations can also facilitate secretion. Plasma. Expression is consistently high in liver, medium in lung and spleen, low in skeletal muscle and undetectable in heart, brain, kidney and testis.

The protein resides in the secreted. It catalyses the reaction The enzyme cleaves the von Willebrand factor at bond 842-Tyr-|-Met-843 within the A2 domain.. Zinc and calcium ions cooperatively modulate enzyme activity. The cleavage of the pro-domain is not required for protease activity. Dependence on calcium for proteolytic activity is mediated by the high affinity site. In terms of biological role, cleaves the vWF multimers in plasma into smaller forms thereby controlling vWF-mediated platelet thrombus formation. The protein is A disintegrin and metalloproteinase with thrombospondin motifs 13 (Adamts13) of Mus musculus (Mouse).